We begin with the raw amino-acid sequence, 277 residues long: Shikimate dehydrogenase (NADP(+)) (277 aa).

Shikimate-binding positions include 15 to 17 (SLS) and Thr62. The Proton acceptor role is filled by Lys66. The shikimate site is built by Asn87 and Asp102. NADP(+) contacts are provided by residues 127–131 (GAGGA), 151–156 (NRTVDK), and Ile219. Tyr221 is a shikimate binding site. Gly242 contacts NADP(+).

This sequence belongs to the shikimate dehydrogenase family. In terms of assembly, homodimer.

The enzyme catalyses shikimate + NADP(+) = 3-dehydroshikimate + NADPH + H(+). It participates in metabolic intermediate biosynthesis; chorismate biosynthesis; chorismate from D-erythrose 4-phosphate and phosphoenolpyruvate: step 4/7. Involved in the biosynthesis of the chorismate, which leads to the biosynthesis of aromatic amino acids. Catalyzes the reversible NADPH linked reduction of 3-dehydroshikimate (DHSA) to yield shikimate (SA). The sequence is that of Shikimate dehydrogenase (NADP(+)) from Bacillus cereus (strain ZK / E33L).